The sequence spans 416 residues: Adenylosuccinate synthetase (416 aa).

Residues 13-19 and 41-43 each bind GTP; these read GDEGKGK and GHT. D14 functions as the Proton acceptor in the catalytic mechanism. Positions 14 and 41 each coordinate Mg(2+). IMP contacts are provided by residues 14–17, 39–42, T126, R140, Q220, T235, and R299; these read DEGK and NAGH. H42 (proton donor) is an active-site residue. 295 to 301 contributes to the substrate binding site; it reads VSTGRKR. GTP-binding positions include R301, 327–329, and 405–407; these read KLD and STS.

The protein belongs to the adenylosuccinate synthetase family. Homodimer. Mg(2+) is required as a cofactor.

The protein localises to the cytoplasm. The catalysed reaction is IMP + L-aspartate + GTP = N(6)-(1,2-dicarboxyethyl)-AMP + GDP + phosphate + 2 H(+). The protein operates within purine metabolism; AMP biosynthesis via de novo pathway; AMP from IMP: step 1/2. Plays an important role in the de novo pathway of purine nucleotide biosynthesis. Catalyzes the first committed step in the biosynthesis of AMP from IMP. This Campylobacter jejuni subsp. jejuni serotype O:2 (strain ATCC 700819 / NCTC 11168) protein is Adenylosuccinate synthetase.